The following is a 1213-amino-acid chain: Genetic suppressor element 1 (1213 aa).

Residues 1 to 154 (MKGMSHEPKS…GSRGSSSGRE (154 aa)) are disordered. S10 is modified (phosphoserine). A compositionally biased stretch (polar residues) spans 15-33 (MLSTATRTTATVNPLTPSP). 2 stretches are compositionally biased toward low complexity: residues 51–63 (SAQA…FAAA) and 76–89 (GSSL…VSSP). S84 and S95 each carry phosphoserine. Residues 103 to 114 (VPMGPIIVPPGG) show a composition bias toward low complexity. Residue R305 is modified to Asymmetric dimethylarginine. Positions 319–402 (HSERMSSLSA…REKELLAAKA (84 aa)) form a coiled coil. The tract at residues 326-384 (LSAERLQMDEELRREREREREREREADREREKEREREQREKEREKELEREREKEREREL) is disordered. Residues 331–384 (LQMDEELRREREREREREREADREREKEREREQREKEREKELEREREKEREREL) are compositionally biased toward basic and acidic residues. Position 433 is a phosphothreonine (T433). K496 carries the N6-acetyllysine modification. Disordered regions lie at residues 527–579 (LDLG…QHTV) and 630–719 (SEKA…TARG). 2 stretches are compositionally biased toward basic and acidic residues: residues 537–560 (EAEH…REPP) and 630–643 (SEKA…EATP). Positions 648–657 (QPPPPPPPPR) are enriched in pro residues. Residues 681–700 (STQTILGQQRPSLSQATSFG) show a composition bias toward polar residues. K739 carries the N6-acetyllysine modification. Residues S766, S826, S828, and S857 each carry the phosphoserine modification. Disordered regions lie at residues 816–858 (RKRR…NNSP), 898–979 (LSAA…EAPG), and 1065–1118 (ELQS…PRRQ). Residues 847 to 858 (TRYSPDEMNNSP) show a composition bias toward polar residues. Residue T905 is modified to Phosphothreonine. A Phosphoserine modification is found at S907. Over residues 1065–1081 (ELQSSSRVPLPQHNGQQ) the composition is skewed to polar residues. Positions 1093-1197 (QEADQDSEED…ELDHLRKCLA (105 aa)) form a coiled coil. The segment covering 1095 to 1112 (ADQDSEEDSEEDSEEEAE) has biased composition (acidic residues). Phosphoserine is present on S1099.

May be a component of a BHC histone deacetylase complex that contains HDAC1, HDAC2, HMG20B/BRAF35, KDM1A, RCOR1/CoREST, PHF21A/BHC80, ZMYM2, ZNF217, ZMYM3, GSE1 and GTF2I.

This is Genetic suppressor element 1 (Gse1) from Mus musculus (Mouse).